The primary structure comprises 478 residues: Putative multidrug resistance outer membrane protein MdtQ (478 aa).

The N-terminal stretch at 1–21 is a signal peptide; that stretch reads MNRDSFYPAIACFPLLLMLAG. C22 is lipidated: N-palmitoyl cysteine. Residue C22 is the site of S-diacylglycerol cysteine attachment.

It belongs to the outer membrane factor (OMF) (TC 1.B.17) family.

It localises to the cell outer membrane. Functionally, could be involved in resistance to puromycin, acriflavine and tetraphenylarsonium chloride. The sequence is that of Putative multidrug resistance outer membrane protein MdtQ (mdtQ) from Shigella flexneri.